A 177-amino-acid polypeptide reads, in one-letter code: Peptide methionine sulfoxide reductase MsrA (177 aa).

Cys14 is an active-site residue.

This sequence belongs to the MsrA Met sulfoxide reductase family.

It catalyses the reaction L-methionyl-[protein] + [thioredoxin]-disulfide + H2O = L-methionyl-(S)-S-oxide-[protein] + [thioredoxin]-dithiol. The enzyme catalyses [thioredoxin]-disulfide + L-methionine + H2O = L-methionine (S)-S-oxide + [thioredoxin]-dithiol. Its function is as follows. Has an important function as a repair enzyme for proteins that have been inactivated by oxidation. Catalyzes the reversible oxidation-reduction of methionine sulfoxide in proteins to methionine. This Bacillus velezensis (strain DSM 23117 / BGSC 10A6 / LMG 26770 / FZB42) (Bacillus amyloliquefaciens subsp. plantarum) protein is Peptide methionine sulfoxide reductase MsrA.